A 309-amino-acid polypeptide reads, in one-letter code: Aspartate carbamoyltransferase catalytic subunit (309 aa).

Residues arginine 59 and threonine 60 each coordinate carbamoyl phosphate. Position 87 (lysine 87) interacts with L-aspartate. The carbamoyl phosphate site is built by arginine 109, histidine 139, and glutamine 142. L-aspartate contacts are provided by arginine 172 and arginine 224. Residues alanine 265 and proline 266 each coordinate carbamoyl phosphate.

This sequence belongs to the aspartate/ornithine carbamoyltransferase superfamily. ATCase family. As to quaternary structure, heterododecamer (2C3:3R2) of six catalytic PyrB chains organized as two trimers (C3), and six regulatory PyrI chains organized as three dimers (R2).

The enzyme catalyses carbamoyl phosphate + L-aspartate = N-carbamoyl-L-aspartate + phosphate + H(+). The protein operates within pyrimidine metabolism; UMP biosynthesis via de novo pathway; (S)-dihydroorotate from bicarbonate: step 2/3. Catalyzes the condensation of carbamoyl phosphate and aspartate to form carbamoyl aspartate and inorganic phosphate, the committed step in the de novo pyrimidine nucleotide biosynthesis pathway. This is Aspartate carbamoyltransferase catalytic subunit from Streptococcus uberis (strain ATCC BAA-854 / 0140J).